The primary structure comprises 509 residues: CDK5RAP3 protein homolog (509 aa).

Belongs to the CDK5RAP3 family.

It is found in the nucleus. The protein localises to the cytoplasm. Functionally, substrate adapter of E3 ligase complexes mediating ufmylation, the covalent attachment of the ubiquitin-like modifier UFM1 to substrate proteins, and which is involved in various processes, such as ribosome recycling and reticulophagy (also called ER-phagy). This Drosophila melanogaster (Fruit fly) protein is CDK5RAP3 protein homolog.